The primary structure comprises 577 residues: Aspartate--tRNA(Asp/Asn) ligase (577 aa).

Glutamate 171 lines the L-aspartate pocket. An aspartate region spans residues 195-198 (QLFK). Arginine 217 is a binding site for L-aspartate. Residues 217–219 (RDE) and glutamine 226 contribute to the ATP site. Residue histidine 444 participates in L-aspartate binding. Glutamate 474 is a binding site for ATP. An L-aspartate-binding site is contributed by arginine 481. Residue 526–529 (GFDR) coordinates ATP.

This sequence belongs to the class-II aminoacyl-tRNA synthetase family. Type 1 subfamily. As to quaternary structure, homodimer.

It localises to the cytoplasm. The enzyme catalyses tRNA(Asx) + L-aspartate + ATP = L-aspartyl-tRNA(Asx) + AMP + diphosphate. In terms of biological role, aspartyl-tRNA synthetase with relaxed tRNA specificity since it is able to aspartylate not only its cognate tRNA(Asp) but also tRNA(Asn). Is 1.7 times more efficient at aminoacylating tRNA(Asp) over tRNA(Asn). Reaction proceeds in two steps: L-aspartate is first activated by ATP to form Asp-AMP and then transferred to the acceptor end of tRNA(Asp/Asn). This is Aspartate--tRNA(Asp/Asn) ligase from Helicobacter pylori (strain ATCC 700392 / 26695) (Campylobacter pylori).